A 465-amino-acid polypeptide reads, in one-letter code: MAHTEQYRFPKDFWWGSSASATQMEGAADRDGKGQNIWDYWFEKEPHRFFDHVGPADTSQFYDNYKEDIRLMKELGHNSFRMSISWSRLIPNGTGEINDKAADFYNNVIDELIANGIEPFVNLFHFDMPMALQKIGGWVNRETVDAYENYARTCFRLFGGRVKKWFTHNEPIVPVEGGYLYDFHYPNKVDFKEAVQVGFHTMLSSARAIQAYREMKQDGKIGIILNLTPSYPRSSHPADVKAGEIADAFFNRSFLDPSVKGEFPKELVDILKHEGFMPDYNAEDLDIIKKNTVDLLGVNYYQPRRVKAKEHLPNPDAPFLPDRYFDPYVMPGRKMNPHRGWEIYEKGVYDILINLKENYGNIECFISENGMGVEGEERFRDEQGIIQDDYRIEFIKEHLKWIHRAIQEGSNVKGYHLWTFMDNWSWTNAYKNRYGFVSVNLEKDGERTVKKSGKWFKEVAEHSGF.

Catalysis depends on glutamate 170, which acts as the Proton donor. Glutamate 368 functions as the Nucleophile in the catalytic mechanism.

The protein belongs to the glycosyl hydrolase 1 family.

It carries out the reaction 6-phospho-beta-D-glucosyl-(1-&gt;4)-D-glucose + H2O = D-glucose 6-phosphate + D-glucose. Functionally, phospho-beta-D-glucosidase that seems to be involved in the degradation of glucomannan. Is also capable of hydrolyzing aryl-phospho-beta-D-glucosides, although very weakly, and plays only a minor role, if any, in the degradation of these substrates in vivo. This chain is 6-phospho-beta-glucosidase GmuD (gmuD), found in Bacillus subtilis (strain 168).